The chain runs to 350 residues: Biotin synthase (350 aa).

Residues 63-281 (GDIELATLLS…IAVARITMPK (219 aa)) enclose the Radical SAM core domain. [4Fe-4S] cluster-binding residues include C78, C82, and C85. The [2Fe-2S] cluster site is built by C122, C153, C213, and R285.

The protein belongs to the radical SAM superfamily. Biotin synthase family. Homodimer. [4Fe-4S] cluster serves as cofactor. The cofactor is [2Fe-2S] cluster.

The catalysed reaction is (4R,5S)-dethiobiotin + (sulfur carrier)-SH + 2 reduced [2Fe-2S]-[ferredoxin] + 2 S-adenosyl-L-methionine = (sulfur carrier)-H + biotin + 2 5'-deoxyadenosine + 2 L-methionine + 2 oxidized [2Fe-2S]-[ferredoxin]. The protein operates within cofactor biosynthesis; biotin biosynthesis; biotin from 7,8-diaminononanoate: step 2/2. Catalyzes the conversion of dethiobiotin (DTB) to biotin by the insertion of a sulfur atom into dethiobiotin via a radical-based mechanism. This Acidovorax ebreus (strain TPSY) (Diaphorobacter sp. (strain TPSY)) protein is Biotin synthase.